The following is a 630-amino-acid chain: 1-deoxy-D-xylulose-5-phosphate synthase (630 aa).

Thiamine diphosphate contacts are provided by residues H72 and 113 to 115; that span reads GHS. Residue D144 coordinates Mg(2+). Thiamine diphosphate-binding positions include 145-146, N173, Y284, and E367; that span reads GA. N173 is a binding site for Mg(2+).

Belongs to the transketolase family. DXPS subfamily. As to quaternary structure, homodimer. Mg(2+) serves as cofactor. It depends on thiamine diphosphate as a cofactor.

It carries out the reaction D-glyceraldehyde 3-phosphate + pyruvate + H(+) = 1-deoxy-D-xylulose 5-phosphate + CO2. It functions in the pathway metabolic intermediate biosynthesis; 1-deoxy-D-xylulose 5-phosphate biosynthesis; 1-deoxy-D-xylulose 5-phosphate from D-glyceraldehyde 3-phosphate and pyruvate: step 1/1. Its function is as follows. Catalyzes the acyloin condensation reaction between C atoms 2 and 3 of pyruvate and glyceraldehyde 3-phosphate to yield 1-deoxy-D-xylulose-5-phosphate (DXP). The polypeptide is 1-deoxy-D-xylulose-5-phosphate synthase (Bacillus cereus (strain ATCC 10987 / NRS 248)).